Reading from the N-terminus, the 357-residue chain is UDP-N-acetylglucosamine--N-acetylmuramyl-(pentapeptide) pyrophosphoryl-undecaprenol N-acetylglucosamine transferase (357 aa).

UDP-N-acetyl-alpha-D-glucosamine is bound by residues 14 to 16 (TGG), Asn120, Arg164, Ser194, and Gln291.

It belongs to the glycosyltransferase 28 family. MurG subfamily.

Its subcellular location is the cell inner membrane. It catalyses the reaction di-trans,octa-cis-undecaprenyl diphospho-N-acetyl-alpha-D-muramoyl-L-alanyl-D-glutamyl-meso-2,6-diaminopimeloyl-D-alanyl-D-alanine + UDP-N-acetyl-alpha-D-glucosamine = di-trans,octa-cis-undecaprenyl diphospho-[N-acetyl-alpha-D-glucosaminyl-(1-&gt;4)]-N-acetyl-alpha-D-muramoyl-L-alanyl-D-glutamyl-meso-2,6-diaminopimeloyl-D-alanyl-D-alanine + UDP + H(+). The protein operates within cell wall biogenesis; peptidoglycan biosynthesis. Its function is as follows. Cell wall formation. Catalyzes the transfer of a GlcNAc subunit on undecaprenyl-pyrophosphoryl-MurNAc-pentapeptide (lipid intermediate I) to form undecaprenyl-pyrophosphoryl-MurNAc-(pentapeptide)GlcNAc (lipid intermediate II). In Fusobacterium nucleatum subsp. nucleatum (strain ATCC 25586 / DSM 15643 / BCRC 10681 / CIP 101130 / JCM 8532 / KCTC 2640 / LMG 13131 / VPI 4355), this protein is UDP-N-acetylglucosamine--N-acetylmuramyl-(pentapeptide) pyrophosphoryl-undecaprenol N-acetylglucosamine transferase.